Reading from the N-terminus, the 252-residue chain is Chaperone protein AggD (252 aa).

A signal peptide spans 1–22 (MKIRRIVSTIAIALSVFTFAHA).

This sequence belongs to the periplasmic pilus chaperone family.

The protein resides in the periplasm. Its function is as follows. Involved in the biogenesis of the AAF/I fimbriae. The polypeptide is Chaperone protein AggD (aggD) (Escherichia coli).